Consider the following 755-residue polypeptide: Catalase-peroxidase (755 aa).

A cross-link (tryptophyl-tyrosyl-methioninium (Trp-Tyr) (with M-271)) is located at residues 91–245 (WHSAGTYRTA…LAAVQMGLIY (155 aa)). The active-site Proton acceptor is the H92. The interval 193–229 (DNRYGKDPESMQPPGEGTLVAEPAEHGNEESRTNQGE) is disordered. Over residues 215 to 224 (PAEHGNEESR) the composition is skewed to basic and acidic residues. Residues 245-271 (YVNPEGPEGNPDPVASAKDIRETFGRM) constitute a cross-link (tryptophyl-tyrosyl-methioninium (Tyr-Met) (with W-91)). H286 provides a ligand contact to heme.

It belongs to the peroxidase family. Peroxidase/catalase subfamily. As to quaternary structure, homodimer or homotetramer. The cofactor is heme b. Post-translationally, formation of the three residue Trp-Tyr-Met cross-link is important for the catalase, but not the peroxidase activity of the enzyme.

The enzyme catalyses H2O2 + AH2 = A + 2 H2O. It carries out the reaction 2 H2O2 = O2 + 2 H2O. Bifunctional enzyme with both catalase and broad-spectrum peroxidase activity. The protein is Catalase-peroxidase of Pseudomonas fluorescens (strain Pf0-1).